A 344-amino-acid polypeptide reads, in one-letter code: Phenylalanine--tRNA ligase alpha subunit (344 aa).

E255 contributes to the Mg(2+) binding site.

It belongs to the class-II aminoacyl-tRNA synthetase family. Phe-tRNA synthetase alpha subunit type 1 subfamily. As to quaternary structure, tetramer of two alpha and two beta subunits. The cofactor is Mg(2+).

The protein localises to the cytoplasm. It carries out the reaction tRNA(Phe) + L-phenylalanine + ATP = L-phenylalanyl-tRNA(Phe) + AMP + diphosphate + H(+). This Persephonella marina (strain DSM 14350 / EX-H1) protein is Phenylalanine--tRNA ligase alpha subunit.